The sequence spans 830 residues: V-type proton ATPase 116 kDa subunit a 3 (830 aa).

Topologically, residues 1–385 (MGSMFRSEEV…DAYGVGRYQE (385 aa)) are cytoplasmic. The segment at 139-158 (QLAAAHTDGASERTPLLQAP) is disordered. The chain crosses the membrane as a helical span at residues 386–404 (VNPAPYTIITFPFLFAVMF). Residues 405 to 406 (GD) are Vacuolar-facing. The chain crosses the membrane as a helical span at residues 407–423 (VGHGLLMFLFALAMVLA). The Cytoplasmic portion of the chain corresponds to 424-438 (ENRPAVKAAQNEIWQ). A helical transmembrane segment spans residues 439-468 (TFFRGRYLLLLMGLFSIYTGFIYNECFSRA). The Vacuolar segment spans residues 469–532 (TSIFPSGWSV…AANHLSFLNS (64 aa)). Residues 533–552 (FKMKMSVILGVVHMAFGVVL) traverse the membrane as a helical segment. The Cytoplasmic segment spans residues 553 to 570 (GVFNHVHFGQRHRLLLET). Residues 571-591 (LPELTFLLGLFGYLVFLVIYK) traverse the membrane as a helical segment. The Vacuolar portion of the chain corresponds to 592–635 (WLCVWAARAASAPSILIHFINMFLFSHSPSNRLLYPRQEVVQAT). A helical membrane pass occupies residues 636–655 (LVVLALAMVPILLLGTPLHL). At 656-720 (LHRHRRRLRR…EVLMHQAIHT (65 aa)) the chain is on the cytoplasmic side. The tract at residues 681 to 701 (LPDASVNGWSSDEEKAGGLDD) is disordered. The helical transmembrane segment at 721–745 (IEFCLGCVSNTASYLRLWALSLAHA) threads the bilayer. The Vacuolar segment spans residues 746–766 (QLSEVLWAMVMRIGLGLGREV). The chain crosses the membrane as a helical span at residues 767-807 (GVAAVVLVPIFAAFAVMTVAILLVMEGLSAFLHALRLHWVE). Residues 808–830 (FQNKFYSGTGYKLSPFTFAATDD) lie on the Cytoplasmic side of the membrane.

Belongs to the V-ATPase 116 kDa subunit family. As to quaternary structure, V-ATPase is a heteromultimeric enzyme made up of two complexes: the ATP-hydrolytic V1 complex and the proton translocation V0 complex. The V1 complex consists of three catalytic AB heterodimers that form a heterohexamer, three peripheral stalks each consisting of EG heterodimers, one central rotor including subunits D and F, and the regulatory subunits C and H. The proton translocation complex V0 consists of the proton transport subunit a, a ring of proteolipid subunits c9c'', rotary subunit d, subunits e and f, and the accessory subunits ATP6AP1/Ac45 and ATP6AP2/PRR. In terms of tissue distribution, isoform long is highly expressed in osteoclastomas. Isoform short is highly expressed in thymus.

The protein resides in the membrane. Its function is as follows. Subunit of the V0 complex of vacuolar(H+)-ATPase (V-ATPase), a multisubunit enzyme composed of a peripheral complex (V1) that hydrolyzes ATP and a membrane integral complex (V0) that translocates protons. V-ATPase is responsible for acidifying and maintaining the pH of intracellular compartments and in some cell types, is targeted to the plasma membrane, where it is responsible for acidifying the extracellular environment. Seems to be directly involved in T-cell activation. The protein is V-type proton ATPase 116 kDa subunit a 3 (TCIRG1) of Homo sapiens (Human).